The following is a 1221-amino-acid chain: Adhesion G-protein coupled receptor G6 (1221 aa).

An N-terminal signal peptide occupies residues 1-37 (MMFRSDRMWSCHWKWKPSPLLFLFALYIMCVPHSVWG). Over 38–862 (CANCRVVLSN…ASQLDARNTK (825 aa)) the chain is Extracellular. An intrachain disulfide couples cysteine 41 to cysteine 67. A CUB domain is found at 41 to 149 (CRVVLSNPSG…KGFNASYIRV (109 aa)). Residues glutamate 89 and aspartate 97 each contribute to the Ca(2+) site. Cysteine 94 and cysteine 111 are joined by a disulfide. An N-linked (GlcNAc...) asparagine glycan is attached at asparagine 121. The Ca(2+) site is built by aspartate 134, serine 136, and isoleucine 137. N-linked (GlcNAc...) asparagine glycosylation is found at asparagine 143, asparagine 206, asparagine 258, asparagine 314, asparagine 324, asparagine 353, asparagine 438, asparagine 445, asparagine 452, asparagine 485, asparagine 488, and asparagine 505. The Pentraxin (PTX) domain occupies 154–356 (RNQKVILPQT…ALKAESNLSC (203 aa)). 2 disulfides stabilise this stretch: cysteine 186–cysteine 254 and cysteine 231–cysteine 277. The interval 473 to 837 (EPRLVLWALL…SDASETVCLC (365 aa)) is mediates interaction with laminin-2. 2 disulfide bridges follow: cysteine 525–cysteine 560 and cysteine 548–cysteine 580. Residues asparagine 563, asparagine 593, asparagine 600, asparagine 605, asparagine 667, asparagine 673, asparagine 695, asparagine 704, asparagine 750, asparagine 776, asparagine 811, and asparagine 818 are each glycosylated (N-linked (GlcNAc...) asparagine). The region spanning 670–853 (SHVNITTRNL…GVLMDLPRSA (184 aa)) is the GAIN-B domain. Disulfide bonds link cysteine 803-cysteine 835 and cysteine 822-cysteine 837. Residues 803–853 (CAFWDLNKNKSFGGWNTSGCVAHRDSDASETVCLCNHFTHFGVLMDLPRSA) are GPS. The stachel stretch occupies residues 842 to 850 (HFGVLMDLP). The chain crosses the membrane as a helical span at residues 863-883 (VLTFISYIGCGISAIFSAATL). At 884–903 (LTYVAFEKLRRDYPSKILMN) the chain is on the cytoplasmic side. The helical transmembrane segment at 904-924 (LSTALLFLNLLFLLDGWITSF) threads the bilayer. Residues 925 to 929 (NVDGL) are Extracellular-facing. Residues 930–950 (CIAVAVLLHFFLLATFTWMGL) traverse the membrane as a helical segment. Topologically, residues 951–970 (EAIHMYIALVKVFNTYIRRY) are cytoplasmic. The chain crosses the membrane as a helical span at residues 971-991 (ILKFCIIGWGLPALVVSVVLA). Residues 992–1024 (SRNNNEVYGKESYGKEKGDEFCWIQDPVIFYVT) are Extracellular-facing. A helical transmembrane segment spans residues 1025–1045 (CAGYFGVMFFLNIAMFIVVMV). Over 1046-1069 (QICGRNGKRSNRTLREEVLRNLRS) the chain is Cytoplasmic. The helical transmembrane segment at 1070–1090 (VVSLTFLLGMTWGFAFFAWGP) threads the bilayer. Over 1091 to 1092 (LN) the chain is Extracellular. The chain crosses the membrane as a helical span at residues 1093 to 1113 (IPFMYLFSIFNSLQGLFIFIF). 17alpha-hydroxyprogesterone is bound at residue asparagine 1103. Over 1114 to 1221 (HCAMKENVQK…GQVLVKTGPC (108 aa)) the chain is Cytoplasmic. Residues 1156–1176 (NLGKSLSSSSIGSNSTYLTSK) are disordered. Serine 1165 and serine 1168 each carry phosphoserine.

Belongs to the G-protein coupled receptor 2 family. Adhesion G-protein coupled receptor (ADGR) subfamily. As to quaternary structure, heterodimer of 2 chains generated by proteolytic processing; the large extracellular N-terminal fragment and the membrane-bound C-terminal fragment predominantly remain associated and non-covalently linked. Interacts with Laminin-2; this interaction stabilizes the receptor in an inactive state. Laminin-2 polymerization could facilitate ADGRG6-NTF removal, thereby exposing the tethered agonist to drive myelination. Interacts with PRNP. Interacts with ITGB1. Interacts with LRP1. Proteolytically cleaved into 2 conserved sites: one in the GPS region of the GAIN-B domain (S1 site) and the other in the middle of the extracellular domain (S2 site). The proteolytic cleavage at S1 site generates an extracellular subunit and a seven-transmembrane subunit. Furin is involved in the cleavage of the S2 site generating a soluble fragment. Processing at the GPS region occurred independent of and probably prior to the cleavage at the S2 site. Proteolytic cleavage is required for activation of the receptor. In terms of processing, highly glycosylated. In terms of tissue distribution, expressed in placenta and to a lower extent in pancreas and liver. Detected in aortic endothelial cells but not in skin microvascular endothelial cells.

The protein localises to the cell membrane. Its activity is regulated as follows. Forms a heterodimer of 2 chains generated by proteolytic processing that remain associated through non-covalent interactions mediated by the GAIN-B domain. In the inactivated receptor, the Stachel sequence (also named stalk) is embedded in the GAIN-B domain, where it adopts a beta-strand conformation. On activation, the Stachel moves into the 7 transmembrane region and adopts a twisted hook-shaped configuration that forms contacts within the receptor, leading to coupling of a G-alpha protein, which activates signaling. The cleaved GAIN-B and N-terminal domains can then dissociate from the rest of the receptor. Functionally, adhesion G-protein coupled receptor (aGPCR) for steroid hormones, such as progesterone and 17alpha-hydroxyprogesterone (17OHP). Involved in many biological processes, such as myelination, sprouting angiogenesis, placenta, ear and cartilage development. Ligand binding causes a conformation change that triggers signaling via guanine nucleotide-binding proteins (G proteins) and modulates the activity of downstream effectors, such as adenylate cyclase. ADGRG6 is coupled to G(i) G alpha proteins and mediates inhibition of adenylate cyclase. Also able to couple to G(q) G proteins. Involved in myelination of the peripheral nervous system: required for differentiation of promyelinating Schwann cells and for normal myelination of axons. Also acts as a regulator of body length and bone mass. Acts as a regulator of blood-brain barrier formation in the central nervous system vie its association with LRP1 and ITGB1. In Homo sapiens (Human), this protein is Adhesion G-protein coupled receptor G6.